The primary structure comprises 340 residues: Ferrochelatase (340 aa).

His189 and Glu292 together coordinate Fe cation.

The protein belongs to the ferrochelatase family.

It is found in the cytoplasm. The catalysed reaction is heme b + 2 H(+) = protoporphyrin IX + Fe(2+). Its pathway is porphyrin-containing compound metabolism; protoheme biosynthesis; protoheme from protoporphyrin-IX: step 1/1. Functionally, catalyzes the ferrous insertion into protoporphyrin IX. This chain is Ferrochelatase, found in Pseudomonas fluorescens biotype C.